We begin with the raw amino-acid sequence, 250 residues long: Probable transcriptional regulatory protein Mmc1_0479 (250 aa).

This sequence belongs to the TACO1 family.

The protein localises to the cytoplasm. The sequence is that of Probable transcriptional regulatory protein Mmc1_0479 from Magnetococcus marinus (strain ATCC BAA-1437 / JCM 17883 / MC-1).